Here is a 278-residue protein sequence, read N- to C-terminus: Tetraspanin-13 (278 aa).

The Cytoplasmic portion of the chain corresponds to 1–25 (MARDKEDQNNENPSIVQNMSFPFNT). Residues 26-46 (IFLISSAIFLVTAAFWFVAVM) traverse the membrane as a helical segment. Residues 47 to 62 (TLHYRTDECNRFVTTP) lie on the Extracellular side of the membrane. Residues 63–83 (GIFISFSLLAMSLTGFYAAYF) form a helical membrane-spanning segment. Topologically, residues 84–92 (KSDCLFRIH) are cytoplasmic. A helical transmembrane segment spans residues 93 to 113 (FFIFFLWMFVVVSKAIFVIFL). Residues 114-249 (HKETNPRLFP…DVHNTSFSIT (136 aa)) are Extracellular-facing. Residues Asn-202, Asn-220, and Asn-243 are each glycosylated (N-linked (GlcNAc...) asparagine). A helical transmembrane segment spans residues 250-270 (VNIIHIIFSLCIGMTGWFAWL). Residues 271 to 278 (RILRESQK) lie on the Cytoplasmic side of the membrane.

This sequence belongs to the tetraspanin (TM4SF) family.

The protein localises to the membrane. Its function is as follows. May be involved in the regulation of cell differentiation. This is Tetraspanin-13 (TET13) from Arabidopsis thaliana (Mouse-ear cress).